A 422-amino-acid polypeptide reads, in one-letter code: MDEQGRLMQARGVGIPGHPIHGGPQTLTPHPMHEPPADNGEPRKQDIGDILQQIMTITDQSLDEAQAKKHALNCHRMKPALFSVLCEIKEKTGLSIRNTQEEEPVDPQLMRLDNMLLAEGVAGPEKGGGSAAAAAAAAASGGVSPDNSIEHSDYRNKLSQIRQIYHAELEKYEQACNEFTTHVMNLLREQSRTRPISPKEIERMVGIIHRKFSSIQMQLKQSTCEAVMILRSRFLDARRKRRNFSKQATEVLNEYFYSHLSNPYPSEEAKEELAKKCGITVSQVSNWFGNKRIRYKKNIGKFQEEANIYAVKTAVSVAQGGHSGANSPTTPTSAGSGGSFNLSGSNDMFMAMQGLNGDSYPPSQVESLRHTMGPGYSDSLSANQMYSPREIRANGGWQEAVTPSSVTSPTEGPGSVHSDTSN.

The segment at 1–43 (MDEQGRLMQARGVGIPGHPIHGGPQTLTPHPMHEPPADNGEPR) is disordered. Basic and acidic residues predominate over residues 31 to 43 (PMHEPPADNGEPR). The PBC domain maps to 42–236 (PRKQDIGDIL…VMILRSRFLD (195 aa)). A PBC-A region spans residues 49 to 128 (DILQQIMTIT…EGVAGPEKGG (80 aa)). The interval 131 to 236 (AAAAAAAAAS…VMILRSRFLD (106 aa)) is PBC-B. The homeobox DNA-binding region spans 237 to 299 (ARRKRRNFSK…NKRIRYKKNI (63 aa)). Disordered stretches follow at residues 319–341 (QGGH…GSFN) and 353–422 (QGLN…DTSN). The segment covering 401–410 (VTPSSVTSPT) has biased composition (polar residues).

This sequence belongs to the TALE/PBX homeobox family.

The protein localises to the nucleus. Its function is as follows. Transcriptional activator that binds the sequence 5'-ATCAATCAA-3'. The sequence is that of Pre-B-cell leukemia transcription factor 2 from Xenopus tropicalis (Western clawed frog).